We begin with the raw amino-acid sequence, 351 residues long: Holliday junction branch migration complex subunit RuvB (351 aa).

A large ATPase domain (RuvB-L) region spans residues 1-182 (MNDRLITPDA…FGIVQRLEYY (182 aa)). Residues isoleucine 21, arginine 22, glycine 63, lysine 66, threonine 67, threonine 68, 129 to 131 (EDF), arginine 172, tyrosine 182, and arginine 219 contribute to the ATP site. Threonine 67 serves as a coordination point for Mg(2+). The small ATPAse domain (RuvB-S) stretch occupies residues 183 to 253 (NVADLSGIVK…VAHAAMELLN (71 aa)). The interval 256–351 (RNGFDEQDRR…QDAPPVGRER (96 aa)) is head domain (RuvB-H). Residues arginine 292, arginine 311, and arginine 316 each coordinate DNA. A disordered region spans residues 328-351 (LNPPRQPDTSPDLFQDAPPVGRER).

The protein belongs to the RuvB family. In terms of assembly, homohexamer. Forms an RuvA(8)-RuvB(12)-Holliday junction (HJ) complex. HJ DNA is sandwiched between 2 RuvA tetramers; dsDNA enters through RuvA and exits via RuvB. An RuvB hexamer assembles on each DNA strand where it exits the tetramer. Each RuvB hexamer is contacted by two RuvA subunits (via domain III) on 2 adjacent RuvB subunits; this complex drives branch migration. In the full resolvosome a probable DNA-RuvA(4)-RuvB(12)-RuvC(2) complex forms which resolves the HJ.

The protein localises to the cytoplasm. It catalyses the reaction ATP + H2O = ADP + phosphate + H(+). The RuvA-RuvB-RuvC complex processes Holliday junction (HJ) DNA during genetic recombination and DNA repair, while the RuvA-RuvB complex plays an important role in the rescue of blocked DNA replication forks via replication fork reversal (RFR). RuvA specifically binds to HJ cruciform DNA, conferring on it an open structure. The RuvB hexamer acts as an ATP-dependent pump, pulling dsDNA into and through the RuvAB complex. RuvB forms 2 homohexamers on either side of HJ DNA bound by 1 or 2 RuvA tetramers; 4 subunits per hexamer contact DNA at a time. Coordinated motions by a converter formed by DNA-disengaged RuvB subunits stimulates ATP hydrolysis and nucleotide exchange. Immobilization of the converter enables RuvB to convert the ATP-contained energy into a lever motion, pulling 2 nucleotides of DNA out of the RuvA tetramer per ATP hydrolyzed, thus driving DNA branch migration. The RuvB motors rotate together with the DNA substrate, which together with the progressing nucleotide cycle form the mechanistic basis for DNA recombination by continuous HJ branch migration. Branch migration allows RuvC to scan DNA until it finds its consensus sequence, where it cleaves and resolves cruciform DNA. This is Holliday junction branch migration complex subunit RuvB from Alkalilimnicola ehrlichii (strain ATCC BAA-1101 / DSM 17681 / MLHE-1).